The chain runs to 219 residues: Phosphatidylserine decarboxylase proenzyme (219 aa).

S182 serves as the catalytic Schiff-base intermediate with substrate; via pyruvic acid. Residue S182 is modified to Pyruvic acid (Ser); by autocatalysis.

It belongs to the phosphatidylserine decarboxylase family. PSD-A subfamily. In terms of assembly, heterodimer of a large membrane-associated beta subunit and a small pyruvoyl-containing alpha subunit. The cofactor is pyruvate. Is synthesized initially as an inactive proenzyme. Formation of the active enzyme involves a self-maturation process in which the active site pyruvoyl group is generated from an internal serine residue via an autocatalytic post-translational modification. Two non-identical subunits are generated from the proenzyme in this reaction, and the pyruvate is formed at the N-terminus of the alpha chain, which is derived from the carboxyl end of the proenzyme. The post-translation cleavage follows an unusual pathway, termed non-hydrolytic serinolysis, in which the side chain hydroxyl group of the serine supplies its oxygen atom to form the C-terminus of the beta chain, while the remainder of the serine residue undergoes an oxidative deamination to produce ammonia and the pyruvoyl prosthetic group on the alpha chain.

The protein resides in the cell membrane. The enzyme catalyses a 1,2-diacyl-sn-glycero-3-phospho-L-serine + H(+) = a 1,2-diacyl-sn-glycero-3-phosphoethanolamine + CO2. The protein operates within phospholipid metabolism; phosphatidylethanolamine biosynthesis; phosphatidylethanolamine from CDP-diacylglycerol: step 2/2. Catalyzes the formation of phosphatidylethanolamine (PtdEtn) from phosphatidylserine (PtdSer). This is Phosphatidylserine decarboxylase proenzyme from Chlorobium phaeovibrioides (strain DSM 265 / 1930) (Prosthecochloris vibrioformis (strain DSM 265)).